Here is a 308-residue protein sequence, read N- to C-terminus: D-alanine--D-alanine ligase (308 aa).

The ATP-grasp domain maps to 102–302 (KHVAKAAGIP…FGEFLRWMVE (201 aa)). 128-183 (PMKPPYVVKPVREGSSFGVVIVKEDQSHPPQVITSSDWRYGDRIMVERYVAGREFT) is an ATP binding site. Mg(2+) contacts are provided by Asp252, Glu269, and Asn271.

The protein belongs to the D-alanine--D-alanine ligase family. The cofactor is Mg(2+). Mn(2+) is required as a cofactor.

It localises to the cytoplasm. The enzyme catalyses 2 D-alanine + ATP = D-alanyl-D-alanine + ADP + phosphate + H(+). Its pathway is cell wall biogenesis; peptidoglycan biosynthesis. In terms of biological role, cell wall formation. The polypeptide is D-alanine--D-alanine ligase (Sinorhizobium medicae (strain WSM419) (Ensifer medicae)).